The sequence spans 406 residues: Zinc metalloprotease Rip1 (406 aa).

Residues 1–21 traverse the membrane as a helical segment; sequence MMFGIGIVLFALAILVSVALH. Position 21 (H21) interacts with Zn(2+). Residue E22 is part of the active site. Residue H25 coordinates Zn(2+). The chain crosses the membrane as a helical span at residues 108-128; the sequence is PAMNFVIGLVLIYGIAIVWGL. The region spanning 125 to 209 is the PDZ domain; it reads VWGLPNLHQP…RIEFKRDGRV (85 aa). Zn(2+) is bound at residue D206. Transmembrane regions (helical) follow at residues 327–349 and 375–395; these read NFVLGAINLVPLLPFDGGHIAVA and LMPATYVVLAVVAGYMLLTVT.

The protein belongs to the peptidase M50B family. The cofactor is Zn(2+).

Its subcellular location is the cell membrane. With respect to regulation, proteolysis is inhibited by Wag31; when Wag31 is non-functional oxidative stress increases proteolysis. Its function is as follows. A probable intramembrane site-2 protease (S2P) that cleaves type-2 transmembrane proteins within their membrane-spanning domains. Degrades PbpB (PBP3, FtsI) under conditions of oxidatives stress; degradation is inhibited by Wag31-PbpB interaction. Also cleaves anti-sigma factors RskA, RslA and RslM. Site-1 proteases have not yet been identified in this organism. In terms of biological role, regulated intramembrane proteolysis (RIP) occurs when an extracytoplasmic signal (possibly oxidative stress) triggers a concerted proteolytic cascade to transmit information and elicit cellular responses. The membrane-spanning regulatory substrate protein (includes anti-sigma factors RskA, RslA, RsmA, and PbpB) is first cut extracytoplasmically (site-1 protease, S1P), then within the membrane itself (site-2 protease, S2P, this entry), while cytoplasmic proteases finish degrading the regulatory protein, liberating the effector protein (ECF sigma factors SigK, SigL and SigM). The sequence is that of Zinc metalloprotease Rip1 (rip1) from Mycolicibacterium smegmatis (strain ATCC 700084 / mc(2)155) (Mycobacterium smegmatis).